Reading from the N-terminus, the 344-residue chain is L-threonine 3-dehydrogenase (344 aa).

Cys42 serves as a coordination point for Zn(2+). Active-site charge relay system residues include Thr44 and His47. His67, Glu68, Cys97, Cys100, Cys103, and Cys111 together coordinate Zn(2+). Residues Ile179, Asp199, Arg204, 266–268 (LGI), and 290–291 (IY) contribute to the NAD(+) site.

It belongs to the zinc-containing alcohol dehydrogenase family. Homotetramer. Zn(2+) is required as a cofactor.

It is found in the cytoplasm. The enzyme catalyses L-threonine + NAD(+) = (2S)-2-amino-3-oxobutanoate + NADH + H(+). Its pathway is amino-acid degradation; L-threonine degradation via oxydo-reductase pathway; glycine from L-threonine: step 1/2. Its function is as follows. Catalyzes the NAD(+)-dependent oxidation of L-threonine to 2-amino-3-ketobutyrate. The protein is L-threonine 3-dehydrogenase of Sinorhizobium medicae (strain WSM419) (Ensifer medicae).